Consider the following 437-residue polypeptide: Xylose isomerase (437 aa).

Active-site residues include H102 and D105. 7 residues coordinate Mg(2+): E233, E269, H272, D297, D308, D310, and D340.

Belongs to the xylose isomerase family. As to quaternary structure, homotetramer. Mg(2+) is required as a cofactor.

The protein resides in the cytoplasm. The catalysed reaction is alpha-D-xylose = alpha-D-xylulofuranose. The polypeptide is Xylose isomerase (Novosphingobium aromaticivorans (strain ATCC 700278 / DSM 12444 / CCUG 56034 / CIP 105152 / NBRC 16084 / F199)).